Consider the following 142-residue polypeptide: Large ribosomal subunit protein uL11 (142 aa).

It belongs to the universal ribosomal protein uL11 family. In terms of assembly, part of the ribosomal stalk of the 50S ribosomal subunit. Interacts with L10 and the large rRNA to form the base of the stalk. L10 forms an elongated spine to which L12 dimers bind in a sequential fashion forming a multimeric L10(L12)X complex. In terms of processing, one or more lysine residues are methylated.

Functionally, forms part of the ribosomal stalk which helps the ribosome interact with GTP-bound translation factors. In Rhodopseudomonas palustris (strain BisA53), this protein is Large ribosomal subunit protein uL11.